Consider the following 206-residue polypeptide: Small ribosomal subunit protein uS4 (206 aa).

Residues serine 96–alanine 158 enclose the S4 RNA-binding domain.

It belongs to the universal ribosomal protein uS4 family. In terms of assembly, part of the 30S ribosomal subunit. Contacts protein S5. The interaction surface between S4 and S5 is involved in control of translational fidelity.

In terms of biological role, one of the primary rRNA binding proteins, it binds directly to 16S rRNA where it nucleates assembly of the body of the 30S subunit. With S5 and S12 plays an important role in translational accuracy. The protein is Small ribosomal subunit protein uS4 of Wigglesworthia glossinidia brevipalpis.